The sequence spans 362 residues: Protein-glutamate methylesterase/protein-glutamine glutaminase (362 aa).

The Response regulatory domain maps to 5 to 122 (KVLCVDDSAL…RDGMLDYSEK (118 aa)). At D56 the chain carries 4-aspartylphosphate. The CheB-type methylesterase domain occupies 163–355 (LLSTEKLIIV…RRVMARLSSM (193 aa)). Residues S175, H201, and D297 contribute to the active site.

Belongs to the CheB family. Post-translationally, phosphorylated by CheA. Phosphorylation of the N-terminal regulatory domain activates the methylesterase activity.

It localises to the cytoplasm. It carries out the reaction [protein]-L-glutamate 5-O-methyl ester + H2O = L-glutamyl-[protein] + methanol + H(+). The catalysed reaction is L-glutaminyl-[protein] + H2O = L-glutamyl-[protein] + NH4(+). Functionally, involved in chemotaxis. Part of a chemotaxis signal transduction system that modulates chemotaxis in response to various stimuli. Catalyzes the demethylation of specific methylglutamate residues introduced into the chemoreceptors (methyl-accepting chemotaxis proteins or MCP) by CheR. Also mediates the irreversible deamidation of specific glutamine residues to glutamic acid. The protein is Protein-glutamate methylesterase/protein-glutamine glutaminase of Paraburkholderia xenovorans (strain LB400).